We begin with the raw amino-acid sequence, 940 residues long: Isoleucine--tRNA ligase (940 aa).

Positions 58-68 (PYANGSIHIGH) match the 'HIGH' region motif. Glu564 provides a ligand contact to L-isoleucyl-5'-AMP. The short motif at 605 to 609 (KMSKS) is the 'KMSKS' region element. Residue Lys608 participates in ATP binding. Zn(2+) contacts are provided by Cys903, Cys906, Cys923, and Cys926.

Belongs to the class-I aminoacyl-tRNA synthetase family. IleS type 1 subfamily. As to quaternary structure, monomer. The cofactor is Zn(2+).

The protein localises to the cytoplasm. It carries out the reaction tRNA(Ile) + L-isoleucine + ATP = L-isoleucyl-tRNA(Ile) + AMP + diphosphate. Functionally, catalyzes the attachment of isoleucine to tRNA(Ile). As IleRS can inadvertently accommodate and process structurally similar amino acids such as valine, to avoid such errors it has two additional distinct tRNA(Ile)-dependent editing activities. One activity is designated as 'pretransfer' editing and involves the hydrolysis of activated Val-AMP. The other activity is designated 'posttransfer' editing and involves deacylation of mischarged Val-tRNA(Ile). This Shewanella baltica (strain OS223) protein is Isoleucine--tRNA ligase.